Here is a 482-residue protein sequence, read N- to C-terminus: Anaerobic nitric oxide reductase flavorubredoxin (482 aa).

The segment at 30–210 (LRGSSYNSYL…PFSRLVTPKI (181 aa)) is zinc metallo-hydrolase. H79, E81, D83, H147, D166, and H227 together coordinate Fe cation. Residues 254 to 393 (ITIFYDTMSN…LCRQHGRDIA (140 aa)) form the Flavodoxin-like domain. FMN is bound by residues 260–264 (TMSNN) and 342–369 (AFGSHGWSGGAVDRLSTRLQDAGFEMSL). The region spanning 426-477 (GPMMQCSVCQWVYDPAKGEPNQDVQPGTPWSEVPDNFLCPECSLGKDVFDVL) is the Rubredoxin-like domain. The Fe cation site is built by C431, C434, C464, and C467.

In the N-terminal section; belongs to the zinc metallo-hydrolase group 3 family. In terms of assembly, homotetramer. Fe cation is required as a cofactor. It depends on FMN as a cofactor.

Its subcellular location is the cytoplasm. The protein operates within nitrogen metabolism; nitric oxide reduction. Anaerobic nitric oxide reductase; uses NADH to detoxify nitric oxide (NO), protecting several 4Fe-4S NO-sensitive enzymes. Has at least 2 reductase partners, only one of which (NorW, flavorubredoxin reductase) has been identified. NO probably binds to the di-iron center; electrons enter from the NorW at rubredoxin and are transferred sequentially to the FMN center and the di-iron center. Also able to function as an aerobic oxygen reductase. This is Anaerobic nitric oxide reductase flavorubredoxin from Klebsiella pneumoniae subsp. pneumoniae (strain ATCC 700721 / MGH 78578).